A 454-amino-acid polypeptide reads, in one-letter code: Exopolyphosphatase PRUNE1 (454 aa).

Met-1 carries the post-translational modification N-acetylmethionine. The Mn(2+) site is built by Asp-28, Asp-30, Asp-106, and Asp-179. The short motif at 106 to 108 is the DHH motif element; that stretch reads DHH. Residues 394–421 form an essential for homodimerization region; the sequence is SLISGLSQDEEDPPLPPTPMNSLVDECP. Residues 397-420 form a disordered region; that stretch reads SGLSQDEEDPPLPPTPMNSLVDEC. Residue Ser-400 is modified to Phosphoserine. Residue Thr-411 is modified to Phosphothreonine. Ser-415 bears the Phosphoserine mark.

The protein belongs to the PPase class C family. Prune subfamily. In terms of assembly, homooligomer. Able to homodimerize via its C-terminal domain. Interacts with NME1. Interacts with GSK3; at focal adhesion complexes where paxillin and vinculin are colocalized. Interacts with alpha and beta tubulin. The cofactor is Mn(2+).

The protein localises to the cytoplasm. The protein resides in the nucleus. It localises to the cell junction. It is found in the focal adhesion. The enzyme catalyses diphosphate + H2O = 2 phosphate + H(+). Activated by magnesium ions and inhibited by manganese ions. Inhibited by dipyridamole, moderately sensitive to IBMX and inhibited by vinpocetine. In terms of biological role, phosphodiesterase (PDE) that has higher activity toward cAMP than cGMP, as substrate. Plays a role in cell proliferation, migration and differentiation, and acts as a negative regulator of NME1. Plays a role in the regulation of neurogenesis. Involved in the regulation of microtubule polymerization. In Mus musculus (Mouse), this protein is Exopolyphosphatase PRUNE1 (Prune1).